A 396-amino-acid polypeptide reads, in one-letter code: Ribosomal RNA large subunit methyltransferase I (396 aa).

The PUA domain maps to 2 to 81 (SVRLVLAKGR…ESIDIAFFSR (80 aa)).

This sequence belongs to the methyltransferase superfamily. RlmI family.

The protein localises to the cytoplasm. The catalysed reaction is cytidine(1962) in 23S rRNA + S-adenosyl-L-methionine = 5-methylcytidine(1962) in 23S rRNA + S-adenosyl-L-homocysteine + H(+). Its function is as follows. Specifically methylates the cytosine at position 1962 (m5C1962) of 23S rRNA. This Shigella flexneri protein is Ribosomal RNA large subunit methyltransferase I.